Here is a 285-residue protein sequence, read N- to C-terminus: MKYIGAHVSAAGGLANAAIRAAEIDATAFALFTKNQRQWRAAPLTTQTIDEFKAACEKYHYTSAQILPHDSYLINLGHPVTEALEKSRDAFIDEMQRCEQLGLSLLNFHPGSHLMQISEEDCLARIAESINIALDKTQGVTAVIENTAGQGSNLGFKFEHLAAIIDGVEDKSRVGVCIDTCHAFAAGYDLRTPAECEKTFADFARIVGFKYLRGMHLNDAKSTFGSRVDRHHSLGEDNIGHDAFRWIMQDDRFDGIPLILETINPDIWAEEIAWLKAQQTEKAVA.

Zn(2+) contacts are provided by His69, His109, Glu145, Asp179, His182, His216, Asp229, His231, and Glu261.

Belongs to the AP endonuclease 2 family. The cofactor is Zn(2+).

The enzyme catalyses Endonucleolytic cleavage to 5'-phosphooligonucleotide end-products.. Its function is as follows. Endonuclease IV plays a role in DNA repair. It cleaves phosphodiester bonds at apurinic or apyrimidinic (AP) sites, generating a 3'-hydroxyl group and a 5'-terminal sugar phosphate. The polypeptide is Probable endonuclease 4 (Shigella boydii serotype 18 (strain CDC 3083-94 / BS512)).